We begin with the raw amino-acid sequence, 432 residues long: Trigger factor (432 aa).

In terms of domain architecture, PPIase FKBP-type spans Glu161–Pro246.

Belongs to the FKBP-type PPIase family. Tig subfamily.

It localises to the cytoplasm. The enzyme catalyses [protein]-peptidylproline (omega=180) = [protein]-peptidylproline (omega=0). In terms of biological role, involved in protein export. Acts as a chaperone by maintaining the newly synthesized protein in an open conformation. Functions as a peptidyl-prolyl cis-trans isomerase. This is Trigger factor from Salmonella schwarzengrund (strain CVM19633).